We begin with the raw amino-acid sequence, 649 residues long: Protein mitoshell (649 aa).

Positions 167 to 176 (LRSEARKPRP) are enriched in basic and acidic residues. Disordered regions lie at residues 167 to 193 (LRSE…ESGA), 389 to 414 (HGPS…EPTS), and 485 to 512 (ALPS…VRSY). Over residues 177-191 (ESVVPEESSISSLES) the composition is skewed to low complexity. 2 stretches are compositionally biased toward polar residues: residues 393 to 414 (AFST…EPTS) and 485 to 503 (ALPS…SPQS).

Functionally, required for male meiotic cytokinesis through its involvement in the regulation of mitochondrial aggregation and fusion, astral spindle assembly and contractile ring formation. This is Protein mitoshell from Drosophila melanogaster (Fruit fly).